The following is a 38-amino-acid chain: Bacteriocin curvaticin FS47 (38 aa).

The protein localises to the secreted. Its function is as follows. Bacteriocin active against Listeria monocytogenes, Pediococcus, Enterococcus, Lactobacilli and Bacilli. This is Bacteriocin curvaticin FS47 from Latilactobacillus curvatus (Lactobacillus curvatus).